The primary structure comprises 1342 residues: DNA-directed RNA polymerase subunit beta (1342 aa).

The protein belongs to the RNA polymerase beta chain family. As to quaternary structure, the RNAP catalytic core consists of 2 alpha, 1 beta, 1 beta' and 1 omega subunit. When a sigma factor is associated with the core the holoenzyme is formed, which can initiate transcription.

The catalysed reaction is RNA(n) + a ribonucleoside 5'-triphosphate = RNA(n+1) + diphosphate. In terms of biological role, DNA-dependent RNA polymerase catalyzes the transcription of DNA into RNA using the four ribonucleoside triphosphates as substrates. The polypeptide is DNA-directed RNA polymerase subunit beta (Edwardsiella ictaluri (strain 93-146)).